Reading from the N-terminus, the 627-residue chain is Druantia protein DruC (627 aa).

The protein resides in the cytoplasm. Its function is as follows. Component of antiviral defense system Druantia type I, composed of DruA, DruB, DruC, DruD and DruE. Expression of Druantia in E.coli (strain MG1655) confers resistance to phage lambda, SECphi18, SECphi27 and T4. This is Druantia protein DruC from Escherichia coli (strain UMEA 4076-1).